The primary structure comprises 688 residues: DNA ligase (688 aa).

NAD(+) contacts are provided by residues 51-55, 100-101, and Glu129; these read DSEYD and SL. Residue Lys131 is the N6-AMP-lysine intermediate of the active site. Positions 152, 189, 308, and 332 each coordinate NAD(+). Residues Cys426, Cys429, Cys444, and Cys450 each contribute to the Zn(2+) site. In terms of domain architecture, BRCT spans 609 to 688; the sequence is ADEQPLKGQT…DELLALLANS (80 aa).

Belongs to the NAD-dependent DNA ligase family. LigA subfamily. Mg(2+) serves as cofactor. Mn(2+) is required as a cofactor.

The enzyme catalyses NAD(+) + (deoxyribonucleotide)n-3'-hydroxyl + 5'-phospho-(deoxyribonucleotide)m = (deoxyribonucleotide)n+m + AMP + beta-nicotinamide D-nucleotide.. DNA ligase that catalyzes the formation of phosphodiester linkages between 5'-phosphoryl and 3'-hydroxyl groups in double-stranded DNA using NAD as a coenzyme and as the energy source for the reaction. It is essential for DNA replication and repair of damaged DNA. The polypeptide is DNA ligase (Shewanella sp. (strain MR-7)).